Consider the following 1010-residue polypeptide: Importin-8 (1010 aa).

An Importin N-terminal domain is found at 22–102 (AETELNQSYK…RDNIVEGIIR (81 aa)). Positions 886-895 (NHSKAEKVDI) are enriched in basic and acidic residues. Residues 886–932 (NHSKAEKVDIEENEEISSEEEEETSVSAQAMQSQIGRSEEEDDDDWD) are disordered. The span at 896 to 909 (EENEEISSEEEEET) shows a compositional bias: acidic residues. A phosphoserine mark is found at Ser-902 and Ser-903. The span at 910–921 (SVSAQAMQSQIG) shows a compositional bias: polar residues.

The protein belongs to the importin beta family. As to quaternary structure, forms a heterodimer with KPNB1. Interacts with SRP19. Interacts with RPL23A. Binds directly to nuclear pore complexes. Interacts with LRPPRC; the interaction occurs when LRPPRC is in its RNA-free form and promotes import of LRPPRC to the nucleus to allow for EIF4E-mediated export of mRNAS from the nucleus to the cytoplasm.

Its subcellular location is the cytoplasm. The protein localises to the nucleus. Involved in nuclear protein import, either by acting as autonomous nuclear transport receptor or as an adapter-like protein in association with the importin-beta subunit KPNB1. Acting autonomously, may serve as receptor for nuclear localization signals (NLS) and promote translocation of import substrates through the nuclear pore complex (NPC) by an energy requiring, Ran-dependent mechanism. At the nucleoplasmic side of the NPC, Ran binds to importin, the importin/substrate complex dissociates and importin is re-exported from the nucleus to the cytoplasm where GTP hydrolysis releases Ran. The directionality of nuclear import is thought to be conferred by an asymmetric distribution of the GTP- and GDP-bound forms of Ran between the cytoplasm and nucleus. In vitro mediates the nuclear import of the signal recognition particle protein SRP19. May also be involved in cytoplasm-to-nucleus shuttling of a broad spectrum of other cargos, including Argonaute-microRNAs complexes, the JUN protein, RELA/NF-kappa-B p65 subunit, the translation initiation factor EIF4E and a set of receptor-activated mothers against decapentaplegic homolog (SMAD) transcription factors that play a critical role downstream of the large family of transforming growth factor beta and bone morphogenetic protein (BMP) cytokines. This chain is Importin-8, found in Mus musculus (Mouse).